We begin with the raw amino-acid sequence, 475 residues long: Ribulose bisphosphate carboxylase large chain (475 aa).

Residues 1–2 (MS) constitute a propeptide that is removed on maturation. An N-acetylproline modification is found at Pro-3. Lys-14 bears the N6,N6,N6-trimethyllysine mark. Positions 123 and 173 each coordinate substrate. Residue Lys-175 is the Proton acceptor of the active site. Position 177 (Lys-177) interacts with substrate. Residues Lys-201, Asp-203, and Glu-204 each contribute to the Mg(2+) site. Lys-201 carries the N6-carboxylysine modification. Catalysis depends on His-294, which acts as the Proton acceptor. Residues Arg-295, His-327, and Ser-379 each contribute to the substrate site.

It belongs to the RuBisCO large chain family. Type I subfamily. In terms of assembly, heterohexadecamer of 8 large chains and 8 small chains; disulfide-linked. The disulfide link is formed within the large subunit homodimers. The cofactor is Mg(2+). Post-translationally, the disulfide bond which can form in the large chain dimeric partners within the hexadecamer appears to be associated with oxidative stress and protein turnover.

The protein localises to the plastid. It localises to the chloroplast. It catalyses the reaction 2 (2R)-3-phosphoglycerate + 2 H(+) = D-ribulose 1,5-bisphosphate + CO2 + H2O. The catalysed reaction is D-ribulose 1,5-bisphosphate + O2 = 2-phosphoglycolate + (2R)-3-phosphoglycerate + 2 H(+). RuBisCO catalyzes two reactions: the carboxylation of D-ribulose 1,5-bisphosphate, the primary event in carbon dioxide fixation, as well as the oxidative fragmentation of the pentose substrate in the photorespiration process. Both reactions occur simultaneously and in competition at the same active site. This chain is Ribulose bisphosphate carboxylase large chain, found in Pinus krempfii (Krempf's pine).